The primary structure comprises 249 residues: Probable GDP-mannose transporter 2 (249 aa).

Topologically, residues 1–15 (MIYTSSKSLQYLAVP) are lumenal. Residues 16–36 (IYTIFKNLTIILIAYGEVLFF) traverse the membrane as a helical segment. Over 37-47 (GGKVTSMELTS) the chain is Cytoplasmic. Residues 48 to 68 (FIMMVLSSVVATWGDQQAIAI) form a helical membrane-spanning segment. The Lumenal segment spans residues 69–84 (KASSLEDLDQELVEST). A helical membrane pass occupies residues 85 to 105 (IFVLNPGYLWMFTNCISSALF). At 106 to 122 (VLIMRKRIRLTNFKDYD) the chain is on the cytoplasmic side. A helical membrane pass occupies residues 123-143 (TMFYNNVLALPLLLVFSFIME). The Lumenal segment spans residues 144–159 (DWSTKNLSVNLSADSL). Asn-149 and Asn-153 each carry an N-linked (GlcNAc...) asparagine glycan. The chain crosses the membrane as a helical span at residues 160-180 (AAMVISGLMSVGISYCSGWCV). The Cytoplasmic portion of the chain corresponds to 181–186 (RVTSST). Residues 187–207 (TYSMVGALNKLPIALAGLVFF) traverse the membrane as a helical segment. Residues 208-211 (DAPK) lie on the Lumenal side of the membrane. The chain crosses the membrane as a helical span at residues 212-232 (NFLSFFSIFLGFLSGLLYAVA). Over 233–249 (KQKKIQQQKVLAATLEK) the chain is Cytoplasmic.

Belongs to the TPT transporter family. SLC35D subfamily.

It is found in the golgi apparatus membrane. The protein resides in the cytoplasmic vesicle membrane. Its subcellular location is the endoplasmic reticulum membrane. Its function is as follows. Involved in the import of GDP-mannose from the cytoplasm into the Golgi lumen. This chain is Probable GDP-mannose transporter 2 (HVG1), found in Saccharomyces cerevisiae (strain RM11-1a) (Baker's yeast).